Consider the following 301-residue polypeptide: Ribosomal RNA small subunit methyltransferase H (301 aa).

Residues 33 to 35 (GGH), D52, F79, D100, and Q107 contribute to the S-adenosyl-L-methionine site.

This sequence belongs to the methyltransferase superfamily. RsmH family.

The protein resides in the cytoplasm. It carries out the reaction cytidine(1402) in 16S rRNA + S-adenosyl-L-methionine = N(4)-methylcytidine(1402) in 16S rRNA + S-adenosyl-L-homocysteine + H(+). In terms of biological role, specifically methylates the N4 position of cytidine in position 1402 (C1402) of 16S rRNA. The chain is Ribosomal RNA small subunit methyltransferase H from Mycoplasmopsis synoviae (strain 53) (Mycoplasma synoviae).